The primary structure comprises 153 residues: 3-hydroxyacyl-[acyl-carrier-protein] dehydratase FabZ (153 aa).

H57 is a catalytic residue.

This sequence belongs to the thioester dehydratase family. FabZ subfamily.

The protein localises to the cytoplasm. The catalysed reaction is a (3R)-hydroxyacyl-[ACP] = a (2E)-enoyl-[ACP] + H2O. In terms of biological role, involved in unsaturated fatty acids biosynthesis. Catalyzes the dehydration of short chain beta-hydroxyacyl-ACPs and long chain saturated and unsaturated beta-hydroxyacyl-ACPs. The sequence is that of 3-hydroxyacyl-[acyl-carrier-protein] dehydratase FabZ from Xanthomonas oryzae pv. oryzae (strain MAFF 311018).